The primary structure comprises 122 residues: Large ribosomal subunit protein bL12 (122 aa).

It belongs to the bacterial ribosomal protein bL12 family. In terms of assembly, homodimer. Part of the ribosomal stalk of the 50S ribosomal subunit. Forms a multimeric L10(L12)X complex, where L10 forms an elongated spine to which 2 to 4 L12 dimers bind in a sequential fashion. Binds GTP-bound translation factors.

Its function is as follows. Forms part of the ribosomal stalk which helps the ribosome interact with GTP-bound translation factors. Is thus essential for accurate translation. The protein is Large ribosomal subunit protein bL12 of Clostridium botulinum (strain Langeland / NCTC 10281 / Type F).